Reading from the N-terminus, the 440-residue chain is L-gulonolactone oxidase (440 aa).

Residues 17 to 187 (YSCEPELYFE…LNVTIQCVPA (171 aa)) form the FAD-binding PCMH-type domain. At His54 the chain carries Pros-8alpha-FAD histidine. A helical membrane pass occupies residues 245–267 (WFWNYAIGYYLLEFLLWISVFVP).

The protein belongs to the oxygen-dependent FAD-linked oxidoreductase family. FAD is required as a cofactor.

It is found in the microsome membrane. Its subcellular location is the endoplasmic reticulum membrane. It catalyses the reaction L-gulono-1,4-lactone + O2 = L-ascorbate + H2O2 + H(+). The protein operates within cofactor biosynthesis; L-ascorbate biosynthesis via UDP-alpha-D-glucuronate pathway; L-ascorbate from UDP-alpha-D-glucuronate: step 4/4. In terms of biological role, oxidizes L-gulono-1,4-lactone to hydrogen peroxide and L-xylo-hexulonolactone which spontaneously isomerizes to L-ascorbate. This is L-gulonolactone oxidase (GULO) from Scyliorhinus torazame (Cloudy catshark).